Consider the following 262-residue polypeptide: MALYFIGLGLYDEKDITLKGLEIARKCDYVFAEFYTSLMAGTNLERIEKLIGKEIRVLSREDVELNFERIVLPLAKDHDVAFLTAGDPLVATTHAELRLRAKKFGVESYVIHAPSIYSAIAITGLHIYKFGKSATISYPEKNWFPTSYYDVIKENLERGLHTLLFLDIKAEKGKYMTANEGMKLLLKVEDMKKEGVFTQETLVVVLARAGSLNPVIRAGYVRDMIREDFGSPPHVLIVPGRLHIVEAEYLVEIAGAPREIIR.

S-adenosyl-L-methionine is bound by residues Leu-10, Asp-87, Val-90, 115-116 (SI), Leu-166, Ala-209, and His-234.

The protein belongs to the diphthine synthase family. As to quaternary structure, homodimer.

It carries out the reaction 2-[(3S)-amino-3-carboxypropyl]-L-histidyl-[translation elongation factor 2] + 3 S-adenosyl-L-methionine = diphthine-[translation elongation factor 2] + 3 S-adenosyl-L-homocysteine + 3 H(+). Its pathway is protein modification; peptidyl-diphthamide biosynthesis. In terms of biological role, S-adenosyl-L-methionine-dependent methyltransferase that catalyzes the trimethylation of the amino group of the modified target histidine residue in translation elongation factor 2 (EF-2), to form an intermediate called diphthine. The three successive methylation reactions represent the second step of diphthamide biosynthesis. The chain is Diphthine synthase from Pyrococcus abyssi (strain GE5 / Orsay).